Here is a 292-residue protein sequence, read N- to C-terminus: 11-beta-hydroxysteroid dehydrogenase 1 (292 aa).

Residues 1 to 7 are Cytoplasmic-facing; sequence MAFMKKY. A helical; Signal-anchor for type II membrane protein transmembrane segment spans residues 8-24; that stretch reads LLPILGLFMAYYYYSAN. At 25–292 the chain is on the lumenal side; the sequence is EEFRPEMLQG…SYNMDRFINK (268 aa). NADP(+) is bound by residues 41 to 67, 92 to 93, and 119 to 121; these read GASK…TARS, TM, and NHI. N-linked (GlcNAc...) asparagine glycans are attached at residues Asn-123 and Asn-162. Ser-170 is a substrate binding site. Tyr-183 functions as the Proton acceptor in the catalytic mechanism. 183 to 187 is a binding site for NADP(+); it reads YSASK. N-linked (GlcNAc...) asparagine glycosylation is present at Asn-207. 218–222 contacts NADP(+); sequence IDTET.

Belongs to the short-chain dehydrogenases/reductases (SDR) family. As to quaternary structure, homodimer. In terms of processing, glycosylated. As to expression, widely expressed, highest expression in liver, lower in testis, ovary, lung, foreskin fibroblasts, and much lower in kidney. Expressed in liver (at protein level). Expressed in the basal cells of the corneal epithelium and in the ciliary nonpigmented epithelium (both at mRNA and at protein level).

The protein localises to the endoplasmic reticulum membrane. It catalyses the reaction an 11beta-hydroxysteroid + NADP(+) = an 11-oxosteroid + NADPH + H(+). The enzyme catalyses cortisone + NADPH + H(+) = cortisol + NADP(+). It carries out the reaction corticosterone + NADP(+) = 11-dehydrocorticosterone + NADPH + H(+). The catalysed reaction is a 7beta-hydroxysteroid + NADP(+) = a 7-oxosteroid + NADPH + H(+). It catalyses the reaction 7-oxocholesterol + NADPH + H(+) = 7beta-hydroxycholesterol + NADP(+). The enzyme catalyses chenodeoxycholate + NADP(+) = 7-oxolithocholate + NADPH + H(+). It carries out the reaction 7-oxolithocholate + NADPH + H(+) = ursodeoxycholate + NADP(+). The catalysed reaction is glycochenodeoxycholate + NADP(+) = 7-oxoglycolithocholate + NADPH + H(+). It catalyses the reaction taurochenodeoxycholate + NADP(+) = 7-oxotaurolithocholate + NADPH + H(+). The enzyme catalyses tauroursodeoxycholate + NADP(+) = 7-oxotaurolithocholate + NADPH + H(+). It carries out the reaction glycoursodeoxycholate + NADP(+) = 7-oxoglycolithocholate + NADPH + H(+). The catalysed reaction is 7-oxopregnenolone + NADPH + H(+) = 7beta-hydroxypregnenolone + NADP(+). It catalyses the reaction 3beta,7alpha-dihydroxyandrost-5-en-17-one + NADP(+) = 3beta-hydroxy-5-androstene-7,17-dione + NADPH + H(+). The enzyme catalyses 3beta-hydroxy-5-androstene-7,17-dione + NADPH + H(+) = 3beta,7beta-dihydroxyandrost-5-en-17-one + NADP(+). It carries out the reaction 3beta-hydroxy-5alpha-androstane-7,17-dione + NADPH + H(+) = 3beta,7beta-dihydroxy-5alpha-androstan-17-one + NADP(+). Its pathway is steroid metabolism. Hexose-6-phosphate dehydrogenase (H6PD) provides cosubstrate NADPH, and the glucose-6-phosphate transporter in the ER-membrane supplies the substrate for H6PDH, their activities stimulate the reduction of cortisone and abolish the oxidation of cortisol. Its function is as follows. Controls the reversible conversion of biologically active glucocorticoids such as cortisone to cortisol, and 11-dehydrocorticosterone to corticosterone in the presence of NADP(H). Participates in the corticosteroid receptor-mediated anti-inflammatory response, as well as metabolic and homeostatic processes. Plays a role in the secretion of aqueous humor in the eye, maintaining a normotensive, intraocular environment. Bidirectional in vitro, predominantly functions as a reductase in vivo, thereby increasing the concentration of active glucocorticoids. It has broad substrate specificity, besides glucocorticoids, it accepts other steroid and sterol substrates. Interconverts 7-oxo- and 7-hydroxy-neurosteroids such as 7-oxopregnenolone and 7beta-hydroxypregnenolone, 7-oxodehydroepiandrosterone (3beta-hydroxy-5-androstene-7,17-dione) and 7beta-hydroxydehydroepiandrosterone (3beta,7beta-dihydroxyandrost-5-en-17-one), among others. Catalyzes the stereo-specific conversion of the major dietary oxysterol, 7-ketocholesterol (7-oxocholesterol), into the more polar 7-beta-hydroxycholesterol metabolite. 7-oxocholesterol is one of the most important oxysterols, it participates in several events such as induction of apoptosis, accumulation in atherosclerotic lesions, lipid peroxidation, and induction of foam cell formation. Mediates the 7-oxo reduction of 7-oxolithocholate mainly to chenodeoxycholate, and to a lesser extent to ursodeoxycholate, both in its free form and when conjugated to glycine or taurine, providing a link between glucocorticoid activation and bile acid metabolism. Catalyzes the synthesis of 7-beta-25-dihydroxycholesterol from 7-oxo-25-hydroxycholesterol in vitro, which acts as a ligand for the G-protein-coupled receptor (GPCR) Epstein-Barr virus-induced gene 2 (EBI2) and may thereby regulate immune cell migration. The polypeptide is 11-beta-hydroxysteroid dehydrogenase 1 (Homo sapiens (Human)).